The chain runs to 2254 residues: Genome polyprotein (2254 aa).

The 155-residue stretch at Gln438 to Arg592 folds into the SF3 helicase domain. Gly464 to Thr471 is an ATP binding site. Tyr956 carries the O-(5'-phospho-RNA)-tyrosine modification. Positions Gly1041 to Lys1196 constitute a Peptidase C24 domain. Active-site for 3CLpro activity residues include His1078, Asp1099, and Cys1163. Positions Arg1434–Met1559 constitute a RdRp catalytic domain. The tract at residues Pro1714–Met1742 is disordered. A compositionally biased stretch (polar residues) spans Ser1719–Arg1734.

In terms of assembly, homodimer. Homomultimer. Interacts with host IEF4E; this interaction plays a role in translation of viral proteins. Specific enzymatic cleavages in vivo yield mature proteins. Pro-Pol is first autocatalytically cleaved, then processes the whole polyprotein. Post-translationally, VPg is uridylylated by the polymerase and is covalently attached to the 5'-end of the polyadenylated genomic and subgenomic RNAs. This uridylylated form acts as a nucleotide-peptide primer for the polymerase.

It is found in the virion. Its subcellular location is the host cytoplasm. It carries out the reaction a ribonucleoside 5'-triphosphate + H2O = a ribonucleoside 5'-diphosphate + phosphate + H(+). It catalyses the reaction RNA(n) + a ribonucleoside 5'-triphosphate = RNA(n+1) + diphosphate. The enzyme catalyses Endopeptidase with a preference for cleavage when the P1 position is occupied by Glu-|-Xaa and the P1' position is occupied by Gly-|-Yaa.. Its function is as follows. Together with NTPase and NS4, initiates the formation of the replication complex. Induces the proliferation of the host smooth ER membranes forming long tubular structures. These remodeled membranes probably form the viral factories that contain the replication complex. Functionally, displays NTPase activity, but no helicase activity. Induces the formation of convoluted membranes derived from the host ER. These remodeled membranes probably form the viral factories that contain the replication complex. Together with NS2 and NS4, initiates the formation of the replication complex. In terms of biological role, probable key protein responsible for the formation of membrane alterations by the virus. Induces the formation of convoluted membranes derived from the host ER. These remodeled membranes probably form the viral factories that contain the replication complex. Together with NS2 and NTPase, initiates the formation of the replication complex. Viral genome-linked protein is covalently linked to the 5'-end of the positive-strand, negative-strand genomic RNAs and subgenomic RNA. Acts as a genome-linked replication primer. May recruit ribosome to viral RNA thereby promoting viral proteins translation. Interacts with host translation initiation complex to allow the translation of viral proteins. Its function is as follows. Protease-polymerase p76 processes the polyprotein: Pro-Pol is first released by autocleavage, then all other proteins are cleaved. Cleaves host translation initiation factor eIF4G1, eIF4G2 and PABP1 thereby inducing a shutdown of host protein synthesis. This shutdown may not prevent viral mRNA from being translated since viral Vpg replaces the cap. It is also an RNA-directed RNA polymerase which replicates genomic and antigenomic viral RNA by recognizing specific signals. Also transcribes a subgenomic mRNA by initiating RNA synthesis internally on antigenomic RNA. This sgRNA codes for structural proteins. Catalyzes the covalent attachment VPg with viral RNAs. Functionally, capsid protein self assembles to form an icosahedral capsid with a T=3 symmetry, about 38 nm in diameter, and consisting of 180 capsid proteins. The capsid encapsulate the genomic RNA and VP2 proteins. Attaches virion to target cells, inducing endocytosis of the viral particle. Acidification of the endosome induces conformational change of capsid protein thereby injecting virus genomic RNA into host cytoplasm. This Porcine enteric sapovirus (isolate Swine/United States/Cowden/1980) (Sw/SV/Cowden/1980/US) protein is Genome polyprotein.